A 796-amino-acid polypeptide reads, in one-letter code: Probable phosphoketolase (796 aa).

The protein belongs to the XFP family. It depends on thiamine diphosphate as a cofactor.

The protein is Probable phosphoketolase of Synechococcus elongatus (strain ATCC 33912 / PCC 7942 / FACHB-805) (Anacystis nidulans R2).